Here is a 222-residue protein sequence, read N- to C-terminus: UPF0502 protein Shewmr4_1554 (222 aa).

Over residues 175-193 the composition is skewed to polar residues; that stretch reads SLSADSPSAGSNSLNAQDR. Positions 175 to 194 are disordered; it reads SLSADSPSAGSNSLNAQDRQ.

This sequence belongs to the UPF0502 family.

The chain is UPF0502 protein Shewmr4_1554 from Shewanella sp. (strain MR-4).